An 84-amino-acid polypeptide reads, in one-letter code: Hydramacin-1 (84 aa).

A signal peptide spans 1 to 24; sequence MRTVVFFILVSIFLVALKPTGTQA. The residue at position 25 (glutamine 25) is a Pyrrolidone carboxylic acid. Intrachain disulfides connect cysteine 29/cysteine 72, cysteine 36/cysteine 65, cysteine 51/cysteine 81, and cysteine 55/cysteine 83.

Expressed in the endodermal epithelium.

The protein resides in the secreted. Its subcellular location is the target cell membrane. Functionally, cationic antimicrobial peptide potently active against Gram-positive and Gram-negative bacteria including multi-resistant human pathogenic strains. Is not active against the Gram-positive Coccus species, Gram-negative non-fermentation species and against the fungus C.albicans. It leads to aggregation of bacteria as an initial step of its bactericidal mechanism. Aggregated cells are connected via electron-dense contacts and adopt a thorn apple-like morphology. Hydramycin contains a belt of positively charged residues that separate two hydrophobic areas. This structure may explain the observed aggregation of bacteria, since each of these areas can immerse into the outer leaflets of the membranes of two individual bacteria. Is able to permeabilize membranes of viable bacteria at low and neutral pH values, but no pore-forming activity is not detected. This is Hydramacin-1 from Hydra vulgaris (Hydra).